Consider the following 336-residue polypeptide: MSFLSKNGAGILACLLISILSWYLGGFFPVVGAPVFAIFIGMLLHPFLSSYKQLDAGLTFSSKKLLQYAVVLLGFGLNISQVFAVGQSSLPVILSTISIALIIAYLFQRFFALDTKLATLVGVGSSICGGSAIAATAPVIDAKEKEVAQAISVIFFFNVLAALIFPTLGTWLHLSNEGFALFAGTAVNDTSSVTAAASAWDSLYQSNTLESATIVKLTRTLAIIPITLFLSYWQSRQQENKQSLQLKKVFPLFILYFILASLLTTLLTSLGVSSSFFTPLKELSKFLIVMAMSAIGLKTNLVAMVKSSGKSILLGAICWIAIILTTLGMQTLIGIF.

8 helical membrane passes run 65-84 (LLQY…QVFA), 91-113 (PVIL…FFAL), 118-140 (ATLV…APVI), 153-175 (VIFF…LHLS), 211-233 (SATI…LSYW), 249-271 (VFPL…TSLG), 286-305 (FLIV…VAMV), and 312-334 (ILLG…TLIG).

Belongs to the UPF0324 family.

The protein localises to the cell membrane. This Streptococcus pneumoniae serotype 4 (strain ATCC BAA-334 / TIGR4) protein is UPF0324 membrane protein SP_0034.